A 200-amino-acid polypeptide reads, in one-letter code: Dephospho-CoA kinase (200 aa).

The DPCK domain occupies 4–200 (TIGLTGSVAT…TFIKRFVKNK (197 aa)). An ATP-binding site is contributed by 12–17 (ATGKST).

This sequence belongs to the CoaE family.

Its subcellular location is the cytoplasm. The enzyme catalyses 3'-dephospho-CoA + ATP = ADP + CoA + H(+). It functions in the pathway cofactor biosynthesis; coenzyme A biosynthesis; CoA from (R)-pantothenate: step 5/5. Catalyzes the phosphorylation of the 3'-hydroxyl group of dephosphocoenzyme A to form coenzyme A. The sequence is that of Dephospho-CoA kinase from Listeria monocytogenes serotype 4b (strain F2365).